Reading from the N-terminus, the 282-residue chain is Protein canopy homolog 3 (282 aa).

An N-terminal signal peptide occupies residues 1 to 33 (MEPLPEPASGPRPRPHRLLLLSLLLLLLPLLPA). Residues 53 to 275 (SKCEVCKYVA…EGIQKASPLT (223 aa)) enclose the Saposin B-type domain. 3 cysteine pairs are disulfide-bonded: C55-C212, C58-C200, and C110-C172. N159 carries an N-linked (GlcNAc...) asparagine glycan. Residues 159 to 185 (NETSAEVADLKKQCDVLVEEFEEVIED) are a coiled coil. Residues 221–282 (KGDTAALGGK…PLTHSPPDEL (62 aa)) form a disordered region. Residues 255-266 (DLDGDPSPEEDE) are compositionally biased toward acidic residues.

The protein belongs to the canopy family. In terms of assembly, interacts with HSP90B1; this interaction is disrupted in the presence of ATP. Interacts with TLR1, TLR2, TLR4 and TLR9.

It localises to the endoplasmic reticulum. Its function is as follows. Toll-like receptor (TLR)-specific co-chaperone for HSP90B1. Required for proper TLR folding, except that of TLR3, and hence controls TLR exit from the endoplasmic reticulum. Consequently, required for both innate and adaptive immune responses. The chain is Protein canopy homolog 3 (CNPY3) from Bos taurus (Bovine).